We begin with the raw amino-acid sequence, 546 residues long: CTP synthase (546 aa).

Residues 1–265 (MTKYVFVTGG…DEIVCHKLGI (265 aa)) are amidoligase domain. Position 13 (Ser13) interacts with CTP. Position 13 (Ser13) interacts with UTP. ATP contacts are provided by residues 14–19 (SLGKGI) and Asp71. Residues Asp71 and Glu139 each contribute to the Mg(2+) site. Residues 146 to 148 (DIE), 186 to 191 (KTKPTQ), and Lys222 each bind CTP. UTP contacts are provided by residues 186 to 191 (KTKPTQ) and Lys222. The Glutamine amidotransferase type-1 domain occupies 290-543 (DIAFVGKYVD…VKAAIARHSA (254 aa)). L-glutamine is bound at residue Gly351. Cys378 serves as the catalytic Nucleophile; for glutamine hydrolysis. L-glutamine is bound by residues 379 to 382 (LGMQ), Glu402, and Arg469. Active-site residues include His516 and Glu518.

It belongs to the CTP synthase family. As to quaternary structure, homotetramer.

It catalyses the reaction UTP + L-glutamine + ATP + H2O = CTP + L-glutamate + ADP + phosphate + 2 H(+). The catalysed reaction is L-glutamine + H2O = L-glutamate + NH4(+). It carries out the reaction UTP + NH4(+) + ATP = CTP + ADP + phosphate + 2 H(+). It functions in the pathway pyrimidine metabolism; CTP biosynthesis via de novo pathway; CTP from UDP: step 2/2. Allosterically activated by GTP, when glutamine is the substrate; GTP has no effect on the reaction when ammonia is the substrate. The allosteric effector GTP functions by stabilizing the protein conformation that binds the tetrahedral intermediate(s) formed during glutamine hydrolysis. Inhibited by the product CTP, via allosteric rather than competitive inhibition. Its function is as follows. Catalyzes the ATP-dependent amination of UTP to CTP with either L-glutamine or ammonia as the source of nitrogen. Regulates intracellular CTP levels through interactions with the four ribonucleotide triphosphates. In Azoarcus sp. (strain BH72), this protein is CTP synthase.